A 139-amino-acid chain; its full sequence is Large ribosomal subunit protein uL16 (139 aa).

A compositionally biased stretch (basic residues) spans 1–19 (MLIPRKVKHRKQHHPKRSG). The segment at 1 to 22 (MLIPRKVKHRKQHHPKRSGVAK) is disordered.

The protein belongs to the universal ribosomal protein uL16 family. Part of the 50S ribosomal subunit.

Binds 23S rRNA and is also seen to make contacts with the A and possibly P site tRNAs. The sequence is that of Large ribosomal subunit protein uL16 from Acidothermus cellulolyticus (strain ATCC 43068 / DSM 8971 / 11B).